The sequence spans 254 residues: Major prion protein (254 aa).

A signal peptide spans 1–28 (MANLGYWLLALFVTTCTDVGLCKKRPKP). The tract at residues 23–38 (KKRPKPGGWNTGGSRY) is interaction with ADGRG6. Residues 23–231 (KKRPKPGGWN…SQAYYDGRRS (209 aa)) are interaction with GRB2, ERI3 and SYN1. The disordered stretch occupies residues 24–107 (KRPKPGGWNT…QWNKPSKPKT (84 aa)). Tandem repeats lie at residues 51 to 59 (PQSGGTWGQ), 60 to 67 (PHGGGWGQ), 68 to 75 (PHGGGWGQ), 76 to 83 (PHGGGWGQ), and 84 to 91 (PHGGGWSQ). Residues 51 to 91 (PQSGGTWGQPHGGGWGQPHGGGWGQPHGGGWGQPHGGGWSQ) form a 5 X 8 AA tandem repeats of P-H-G-G-G-W-G-Q region. Over residues 55–95 (GTWGQPHGGGWGQPHGGGWGQPHGGGWGQPHGGGWSQGGGT) the composition is skewed to gly residues. Histidine 61, glycine 62, glycine 63, histidine 69, glycine 70, glycine 71, histidine 77, glycine 78, glycine 79, histidine 85, glycine 86, and glycine 87 together coordinate Cu(2+). A disulfide bridge links cysteine 179 with cysteine 214. Asparagine 181 and asparagine 197 each carry an N-linked (GlcNAc...) asparagine glycan. Residue serine 231 is the site of GPI-anchor amidated serine attachment. Residues 232–254 (SAVLFSSPPVILLISFLIFLIVG) constitute a propeptide, removed in mature form.

Belongs to the prion family. As to quaternary structure, monomer and homodimer. Has a tendency to aggregate into amyloid fibrils containing a cross-beta spine, formed by a steric zipper of superposed beta-strands. Soluble oligomers may represent an intermediate stage on the path to fibril formation. Copper binding may promote oligomerization. Interacts with GRB2, APP, ERI3/PRNPIP and SYN1. Mislocalized cytosolically exposed PrP interacts with MGRN1; this interaction alters MGRN1 subcellular location and causes lysosomal enlargement. Interacts with APP. Interacts with KIAA1191. Interacts with ADGRG6.

The protein resides in the cell membrane. The protein localises to the golgi apparatus. In terms of biological role, its primary physiological function is unclear. May play a role in neuronal development and synaptic plasticity. May be required for neuronal myelin sheath maintenance. May promote myelin homeostasis through acting as an agonist for ADGRG6 receptor. May play a role in iron uptake and iron homeostasis. Soluble oligomers are toxic to cultured neuroblastoma cells and induce apoptosis (in vitro). Association with GPC1 (via its heparan sulfate chains) targets PRNP to lipid rafts. Also provides Cu(2+) or Zn(2+) for the ascorbate-mediated GPC1 deaminase degradation of its heparan sulfate side chains. This chain is Major prion protein (Prnp), found in Rattus norvegicus (Rat).